Here is a 394-residue protein sequence, read N- to C-terminus: Elongation factor Tu 1 (394 aa).

Positions 10-204 constitute a tr-type G domain; the sequence is KPHVNVGTIG…ALDTYIPEPA (195 aa). Positions 19 to 26 are G1; sequence GHVDHGKT. A GTP-binding site is contributed by 19–26; the sequence is GHVDHGKT. T26 lines the Mg(2+) pocket. The segment at 60–64 is G2; that stretch reads GITIN. Residues 81-84 are G3; it reads DCPG. GTP-binding positions include 81–85 and 136–139; these read DCPGH and NKCD. Residues 136–139 form a G4 region; the sequence is NKCD. Positions 174 to 176 are G5; the sequence is SAL.

It belongs to the TRAFAC class translation factor GTPase superfamily. Classic translation factor GTPase family. EF-Tu/EF-1A subfamily. Monomer.

The protein localises to the cytoplasm. It catalyses the reaction GTP + H2O = GDP + phosphate + H(+). GTP hydrolase that promotes the GTP-dependent binding of aminoacyl-tRNA to the A-site of ribosomes during protein biosynthesis. In Shewanella frigidimarina (strain NCIMB 400), this protein is Elongation factor Tu 1.